Consider the following 114-residue polypeptide: Probable non-functional T cell receptor beta variable 5-7 (114 aa).

Residues 1–21 (MGPGLLCWVLLCPLGEGPVDA) form the signal peptide. Positions 22–114 (GVTQSPTHLI…SALYLCASSL (93 aa)) constitute an Ig-like domain. A disulfide bond links cysteine 42 and cysteine 110. N-linked (GlcNAc...) asparagine glycosylation is present at asparagine 90.

Alpha-beta TR is a heterodimer composed of an alpha and beta chain; disulfide-linked. The alpha-beta TR is associated with the transmembrane signaling CD3 coreceptor proteins to form the TR-CD3 (TcR or TCR). The assembly of alpha-beta TR heterodimers with CD3 occurs in the endoplasmic reticulum where a single alpha-beta TR heterodimer associates with one CD3D-CD3E heterodimer, one CD3G-CD3E heterodimer and one CD247 homodimer forming a stable octameric structure. CD3D-CD3E and CD3G-CD3E heterodimers preferentially associate with TR alpha and TR beta chains, respectively. The association of the CD247 homodimer is the last step of TcR assembly in the endoplasmic reticulum and is required for transport to the cell surface.

The protein localises to the cell membrane. Its function is as follows. Probable non-functional open reading frame (ORF) of V region of the variable domain of T cell receptor (TR) beta chain. Non-functional ORF generally cannot participate in the synthesis of a productive T cell receptor (TR) chain due to altered V-(D)-J or switch recombination and/or splicing site (at mRNA level) and/or conserved amino acid change (protein level). Alpha-beta T cell receptors are antigen specific receptors which are essential to the immune response and are present on the cell surface of T lymphocytes. Recognize peptide-major histocompatibility (MH) (pMH) complexes that are displayed by antigen presenting cells (APC), a prerequisite for efficient T cell adaptive immunity against pathogens. Binding of alpha-beta TR to pMH complex initiates TR-CD3 clustering on the cell surface and intracellular activation of LCK that phosphorylates the ITAM motifs of CD3G, CD3D, CD3E and CD247 enabling the recruitment of ZAP70. In turn ZAP70 phosphorylates LAT, which recruits numerous signaling molecules to form the LAT signalosome. The LAT signalosome propagates signal branching to three major signaling pathways, the calcium, the mitogen-activated protein kinase (MAPK) kinase and the nuclear factor NF-kappa-B (NF-kB) pathways, leading to the mobilization of transcription factors that are critical for gene expression and essential for T cell growth and differentiation. The T cell repertoire is generated in the thymus, by V-(D)-J rearrangement. This repertoire is then shaped by intrathymic selection events to generate a peripheral T cell pool of self-MH restricted, non-autoaggressive T cells. Post-thymic interaction of alpha-beta TR with the pMH complexes shapes TR structural and functional avidity. The polypeptide is Probable non-functional T cell receptor beta variable 5-7 (Homo sapiens (Human)).